The sequence spans 497 residues: Bifunctional protein GlmU (497 aa).

The interval 1-243 (MTSSTTSSTD…SALVAGVNDR (243 aa)) is pyrophosphorylase. UDP-N-acetyl-alpha-D-glucosamine is bound by residues 16–19 (LAAG), lysine 30, glutamine 87, and 92–93 (GT). Aspartate 118 lines the Mg(2+) pocket. Positions 153, 168, 183, and 241 each coordinate UDP-N-acetyl-alpha-D-glucosamine. Position 241 (asparagine 241) interacts with Mg(2+). A linker region spans residues 244–264 (VQLAALGAELNRRIVTAHQRA). The segment at 265–497 (GVTVIDPGST…LGHHDDSQGS (233 aa)) is N-acetyltransferase. Residues arginine 346 and lysine 364 each coordinate UDP-N-acetyl-alpha-D-glucosamine. Histidine 376 (proton acceptor) is an active-site residue. UDP-N-acetyl-alpha-D-glucosamine contacts are provided by tyrosine 379 and asparagine 390. Acetyl-CoA-binding positions include alanine 393, 399–400 (NY), serine 418, and alanine 436. The tract at residues 473–497 (ARAAERASGEAAEQALGHHDDSQGS) is disordered. Residues 488 to 497 (LGHHDDSQGS) show a composition bias toward basic and acidic residues.

The protein in the N-terminal section; belongs to the N-acetylglucosamine-1-phosphate uridyltransferase family. In the C-terminal section; belongs to the transferase hexapeptide repeat family. Homotrimer. The cofactor is Mg(2+).

The protein localises to the cytoplasm. It catalyses the reaction alpha-D-glucosamine 1-phosphate + acetyl-CoA = N-acetyl-alpha-D-glucosamine 1-phosphate + CoA + H(+). It carries out the reaction N-acetyl-alpha-D-glucosamine 1-phosphate + UTP + H(+) = UDP-N-acetyl-alpha-D-glucosamine + diphosphate. It participates in nucleotide-sugar biosynthesis; UDP-N-acetyl-alpha-D-glucosamine biosynthesis; N-acetyl-alpha-D-glucosamine 1-phosphate from alpha-D-glucosamine 6-phosphate (route II): step 2/2. It functions in the pathway nucleotide-sugar biosynthesis; UDP-N-acetyl-alpha-D-glucosamine biosynthesis; UDP-N-acetyl-alpha-D-glucosamine from N-acetyl-alpha-D-glucosamine 1-phosphate: step 1/1. The protein operates within bacterial outer membrane biogenesis; LPS lipid A biosynthesis. Functionally, catalyzes the last two sequential reactions in the de novo biosynthetic pathway for UDP-N-acetylglucosamine (UDP-GlcNAc). The C-terminal domain catalyzes the transfer of acetyl group from acetyl coenzyme A to glucosamine-1-phosphate (GlcN-1-P) to produce N-acetylglucosamine-1-phosphate (GlcNAc-1-P), which is converted into UDP-GlcNAc by the transfer of uridine 5-monophosphate (from uridine 5-triphosphate), a reaction catalyzed by the N-terminal domain. The polypeptide is Bifunctional protein GlmU (Mycobacterium sp. (strain JLS)).